Consider the following 462-residue polypeptide: Chromosomal replication initiator protein DnaA (462 aa).

Residues M1–A84 form a domain I, interacts with DnaA modulators region. Residues A84–S125 form a domain II region. Residues N126–A342 are domain III, AAA+ region. Positions 170, 172, 173, and 174 each coordinate ATP. Residues N343 to S462 are domain IV, binds dsDNA.

Belongs to the DnaA family. Oligomerizes as a right-handed, spiral filament on DNA at oriC.

Its subcellular location is the cytoplasm. Its function is as follows. Plays an essential role in the initiation and regulation of chromosomal replication. ATP-DnaA binds to the origin of replication (oriC) to initiate formation of the DNA replication initiation complex once per cell cycle. Binds the DnaA box (a 9 base pair repeat at the origin) and separates the double-stranded (ds)DNA. Forms a right-handed helical filament on oriC DNA; dsDNA binds to the exterior of the filament while single-stranded (ss)DNA is stabiized in the filament's interior. The ATP-DnaA-oriC complex binds and stabilizes one strand of the AT-rich DNA unwinding element (DUE), permitting loading of DNA polymerase. After initiation quickly degrades to an ADP-DnaA complex that is not apt for DNA replication. Binds acidic phospholipids. The protein is Chromosomal replication initiator protein DnaA of Shewanella denitrificans (strain OS217 / ATCC BAA-1090 / DSM 15013).